A 202-amino-acid chain; its full sequence is Ras-related protein Rab-1A (202 aa).

GTP-binding positions include 15 to 23 (GDSGVGKSC), 33 to 40 (YSESFIST), 63 to 67 (DTAGQ), 121 to 124 (NKSD), and 151 to 153 (SAK). The short motif at 37 to 45 (FISTIGVDF) is the Effector region element. Positions 180 to 202 (QTVDKNKVVPGSSAPISPKSGCC) are disordered. Residues C201 and C202 are each lipidated (S-geranylgeranyl cysteine).

The protein belongs to the small GTPase superfamily. Rab family.

The protein localises to the cell membrane. This is Ras-related protein Rab-1A (rab1A) from Dictyostelium discoideum (Social amoeba).